Here is a 297-residue protein sequence, read N- to C-terminus: Taste receptor type 2 member 4 (297 aa).

Topologically, residues 1–11 are extracellular; it reads MLWELYVFVFA. Residues 12-32 form a helical membrane-spanning segment; the sequence is ASVFLNFVGIIANLFIIVIII. Residues 33-46 are Cytoplasmic-facing; that stretch reads KTWVNSRRIASPDR. The chain crosses the membrane as a helical span at residues 47–67; the sequence is ILFSLAITRFLTLGLFLLNSV. Topologically, residues 68–80 are extracellular; it reads YIATNTGRSVYFS. A helical membrane pass occupies residues 81 to 101; it reads TFFLLCWKFLDANSLWLVTIL. Over 102–128 the chain is Cytoplasmic; that stretch reads NSLYCVKITNFQHPVFLLLKRTISMKT. A helical transmembrane segment spans residues 129–149; that stretch reads TSLLLACLLISALTTLLYYML. At 150 to 171 the chain is on the extracellular side; that stretch reads SQISRFPEHIIGRNDTSFDLSD. The N-linked (GlcNAc...) asparagine glycan is linked to asparagine 163. Residues 172–192 form a helical membrane-spanning segment; that stretch reads GILTLVASLVLNSLLQFMLNV. Residues 193-229 lie on the Cytoplasmic side of the membrane; it reads TFASLLIHSLRRHIQKMQRNRTSFWNPQTEAHMGAMR. Residues 230 to 250 form a helical membrane-spanning segment; it reads LMICFLVLYIPYSIATLLYLP. Topologically, residues 251-260 are extracellular; it reads SYMRKNLRAQ. The helical transmembrane segment at 261-281 threads the bilayer; the sequence is AICMIITAAYPPGHSVLLIIT. The Cytoplasmic segment spans residues 282-297; that stretch reads HHKLKAKAKKIFCFYK.

Belongs to the G-protein coupled receptor T2R family. As to expression, expressed in subsets of taste receptor cells of the tongue and palate epithelium and exclusively in gustducin-positive cells. Expressed in 15% taste bud cells in circumvallate and foliate papillae but only in 2% in fungiform papillae.

It is found in the membrane. Its subcellular location is the cell projection. It localises to the cilium membrane. Gustducin-coupled receptor for denatonium and N(6)-propyl-2-thiouracil implicated in the perception of bitter compounds in the oral cavity and the gastrointestinal tract. Signals through PLCB2 and the calcium-regulated cation channel TRPM5. In airway epithelial cells, binding of denatonium increases the intracellular calcium ion concentration and stimulates ciliary beat frequency. The protein is Taste receptor type 2 member 4 (Tas2r4) of Mus musculus (Mouse).